The following is a 260-amino-acid chain: Cytochrome c oxidase subunit 2 (260 aa).

Over 1–39 the chain is Mitochondrial intermembrane; the sequence is MKFEWLFLTIAPCDAAEPWQLGFQDAATPMMQGIIDLHH. Residues 40–61 form a helical membrane-spanning segment; sequence DIFFFLILILVFVSRILVRALW. At 62–76 the chain is on the mitochondrial matrix side; sequence HFHYKKNPIPQRIVH. A helical transmembrane segment spans residues 77 to 104; that stretch reads GTTIEILRTIFPSIIPMFIAIPSFALLY. Topologically, residues 105-260 are mitochondrial intermembrane; that stretch reads SMDEVVVDPA…QLIPQTTGEA (156 aa). Cu cation contacts are provided by His186, Cys221, Glu223, Cys225, and His229. Glu223 is a binding site for Mg(2+).

The protein belongs to the cytochrome c oxidase subunit 2 family. In terms of assembly, component of the cytochrome c oxidase (complex IV, CIV), a multisubunit enzyme composed of a catalytic core of 3 subunits and several supernumerary subunits. The complex exists as a monomer or a dimer and forms supercomplexes (SCs) in the inner mitochondrial membrane with ubiquinol-cytochrome c oxidoreductase (cytochrome b-c1 complex, complex III, CIII). Requires Cu cation as cofactor.

It is found in the mitochondrion inner membrane. It catalyses the reaction 4 Fe(II)-[cytochrome c] + O2 + 8 H(+)(in) = 4 Fe(III)-[cytochrome c] + 2 H2O + 4 H(+)(out). Its function is as follows. Component of the cytochrome c oxidase, the last enzyme in the mitochondrial electron transport chain which drives oxidative phosphorylation. The respiratory chain contains 3 multisubunit complexes succinate dehydrogenase (complex II, CII), ubiquinol-cytochrome c oxidoreductase (cytochrome b-c1 complex, complex III, CIII) and cytochrome c oxidase (complex IV, CIV), that cooperate to transfer electrons derived from NADH and succinate to molecular oxygen, creating an electrochemical gradient over the inner membrane that drives transmembrane transport and the ATP synthase. Cytochrome c oxidase is the component of the respiratory chain that catalyzes the reduction of oxygen to water. Electrons originating from reduced cytochrome c in the intermembrane space (IMS) are transferred via the dinuclear copper A center (CU(A)) of subunit 2 and heme A of subunit 1 to the active site in subunit 1, a binuclear center (BNC) formed by heme A3 and copper B (CU(B)). The BNC reduces molecular oxygen to 2 water molecules using 4 electrons from cytochrome c in the IMS and 4 protons from the mitochondrial matrix. The polypeptide is Cytochrome c oxidase subunit 2 (COX2) (Glycine max (Soybean)).